We begin with the raw amino-acid sequence, 456 residues long: Glycerol-3-phosphate acyltransferase 4 (456 aa).

A signal peptide spans 1-37 (MFLLLPFDSLIVNLLGISLTVLFTLLLVFIIVPAIFG). The next 2 helical transmembrane spans lie at 156-176 (ISLR…CFLL) and 180-200 (IALA…VGYL). N247 is a glycosylation site (N-linked (GlcNAc...) asparagine). Positions 248 to 253 (HTSPID) match the HXXXXD motif motif. N327, N328, and N362 each carry an N-linked (GlcNAc...) asparagine glycan.

The protein belongs to the 1-acyl-sn-glycerol-3-phosphate acyltransferase family. Highly expressed in testis.

It is found in the endoplasmic reticulum membrane. The enzyme catalyses sn-glycerol 3-phosphate + an acyl-CoA = a 1-acyl-sn-glycero-3-phosphate + CoA. It catalyses the reaction dodecanoyl-CoA + sn-glycerol 3-phosphate = 1-dodecanoyl-sn-glycerol 3-phosphate + CoA. The catalysed reaction is sn-glycerol 3-phosphate + hexadecanoyl-CoA = 1-hexadecanoyl-sn-glycero-3-phosphate + CoA. It carries out the reaction sn-glycerol 3-phosphate + octadecanoyl-CoA = 1-octadecanoyl-sn-glycero-3-phosphate + CoA. The enzyme catalyses sn-glycerol 3-phosphate + (9Z)-octadecenoyl-CoA = 1-(9Z-octadecenoyl)-sn-glycero-3-phosphate + CoA. It catalyses the reaction (9Z,12Z)-octadecadienoyl-CoA + sn-glycerol 3-phosphate = 1-(9Z,12Z)-octadecadienoyl-sn-glycero-3-phosphate + CoA. It participates in phospholipid metabolism; CDP-diacylglycerol biosynthesis; CDP-diacylglycerol from sn-glycerol 3-phosphate: step 1/3. Its function is as follows. Converts glycerol-3-phosphate to 1-acyl-sn-glycerol-3-phosphate (lysophosphatidic acid or LPA) by incorporating an acyl moiety at the sn-1 position of the glycerol backbone. Active against both saturated and unsaturated long-chain fatty acyl-CoAs. Protects cells against lipotoxicity. The polypeptide is Glycerol-3-phosphate acyltransferase 4 (Mus musculus (Mouse)).